Here is a 1270-residue protein sequence, read N- to C-terminus: DNA-directed RNA polymerase subunit beta (1270 aa).

This sequence belongs to the RNA polymerase beta chain family. As to quaternary structure, the RNAP catalytic core consists of 2 alpha, 1 beta, 1 beta' and 1 omega subunit. When a sigma factor is associated with the core the holoenzyme is formed, which can initiate transcription.

The enzyme catalyses RNA(n) + a ribonucleoside 5'-triphosphate = RNA(n+1) + diphosphate. DNA-dependent RNA polymerase catalyzes the transcription of DNA into RNA using the four ribonucleoside triphosphates as substrates. The sequence is that of DNA-directed RNA polymerase subunit beta from Bacteroides thetaiotaomicron (strain ATCC 29148 / DSM 2079 / JCM 5827 / CCUG 10774 / NCTC 10582 / VPI-5482 / E50).